A 381-amino-acid chain; its full sequence is Chaperone protein DnaJ (381 aa).

Residues 5 to 70 (DYYEVLGLQK…QKRAAYDQYG (66 aa)) form the J domain. The CR-type zinc-finger motif lies at 133-211 (GTTKDIQINT…CHGEGRVHKK (79 aa)). Cys146, Cys149, Cys163, Cys166, Cys185, Cys188, Cys199, and Cys202 together coordinate Zn(2+). 4 CXXCXGXG motif repeats span residues 146–153 (CDSCGGSG), 163–170 (CPHCHGSG), 185–192 (CPTCHGSG), and 199–206 (CRSCHGEG).

The protein belongs to the DnaJ family. Homodimer. It depends on Zn(2+) as a cofactor.

The protein resides in the cytoplasm. In terms of biological role, participates actively in the response to hyperosmotic and heat shock by preventing the aggregation of stress-denatured proteins and by disaggregating proteins, also in an autonomous, DnaK-independent fashion. Unfolded proteins bind initially to DnaJ; upon interaction with the DnaJ-bound protein, DnaK hydrolyzes its bound ATP, resulting in the formation of a stable complex. GrpE releases ADP from DnaK; ATP binding to DnaK triggers the release of the substrate protein, thus completing the reaction cycle. Several rounds of ATP-dependent interactions between DnaJ, DnaK and GrpE are required for fully efficient folding. Also involved, together with DnaK and GrpE, in the DNA replication of plasmids through activation of initiation proteins. This Haemophilus influenzae (strain 86-028NP) protein is Chaperone protein DnaJ.